We begin with the raw amino-acid sequence, 333 residues long: 4-hydroxy-3-methylbut-2-enyl diphosphate reductase (333 aa).

A [4Fe-4S] cluster-binding site is contributed by Cys-20. The (2E)-4-hydroxy-3-methylbut-2-enyl diphosphate site is built by His-49 and His-85. Residues His-49 and His-85 each coordinate dimethylallyl diphosphate. Positions 49 and 85 each coordinate isopentenyl diphosphate. Residue Cys-107 coordinates [4Fe-4S] cluster. His-135 is a binding site for (2E)-4-hydroxy-3-methylbut-2-enyl diphosphate. A dimethylallyl diphosphate-binding site is contributed by His-135. His-135 serves as a coordination point for isopentenyl diphosphate. The active-site Proton donor is the Glu-137. Thr-176 contributes to the (2E)-4-hydroxy-3-methylbut-2-enyl diphosphate binding site. Cys-206 is a binding site for [4Fe-4S] cluster. Positions 234, 235, 236, and 279 each coordinate (2E)-4-hydroxy-3-methylbut-2-enyl diphosphate. Residues Ser-234, Ser-235, Asn-236, and Ser-279 each contribute to the dimethylallyl diphosphate site. Isopentenyl diphosphate contacts are provided by Ser-234, Ser-235, Asn-236, and Ser-279.

This sequence belongs to the IspH family. The cofactor is [4Fe-4S] cluster.

It carries out the reaction isopentenyl diphosphate + 2 oxidized [2Fe-2S]-[ferredoxin] + H2O = (2E)-4-hydroxy-3-methylbut-2-enyl diphosphate + 2 reduced [2Fe-2S]-[ferredoxin] + 2 H(+). It catalyses the reaction dimethylallyl diphosphate + 2 oxidized [2Fe-2S]-[ferredoxin] + H2O = (2E)-4-hydroxy-3-methylbut-2-enyl diphosphate + 2 reduced [2Fe-2S]-[ferredoxin] + 2 H(+). The protein operates within isoprenoid biosynthesis; dimethylallyl diphosphate biosynthesis; dimethylallyl diphosphate from (2E)-4-hydroxy-3-methylbutenyl diphosphate: step 1/1. It participates in isoprenoid biosynthesis; isopentenyl diphosphate biosynthesis via DXP pathway; isopentenyl diphosphate from 1-deoxy-D-xylulose 5-phosphate: step 6/6. Functionally, catalyzes the conversion of 1-hydroxy-2-methyl-2-(E)-butenyl 4-diphosphate (HMBPP) into a mixture of isopentenyl diphosphate (IPP) and dimethylallyl diphosphate (DMAPP). Acts in the terminal step of the DOXP/MEP pathway for isoprenoid precursor biosynthesis. The sequence is that of 4-hydroxy-3-methylbut-2-enyl diphosphate reductase from Rhizobium leguminosarum bv. trifolii (strain WSM2304).